Consider the following 502-residue polypeptide: ATP synthase subunit alpha (502 aa).

The interval 115 to 134 (IDGQGPINTTKTRPVEQKAT) is disordered. 169 to 176 (GDRQTGKT) provides a ligand contact to ATP.

The protein belongs to the ATPase alpha/beta chains family. As to quaternary structure, F-type ATPases have 2 components, CF(1) - the catalytic core - and CF(0) - the membrane proton channel. CF(1) has five subunits: alpha(3), beta(3), gamma(1), delta(1), epsilon(1). CF(0) has three main subunits: a(1), b(2) and c(9-12). The alpha and beta chains form an alternating ring which encloses part of the gamma chain. CF(1) is attached to CF(0) by a central stalk formed by the gamma and epsilon chains, while a peripheral stalk is formed by the delta and b chains.

The protein localises to the cell membrane. It carries out the reaction ATP + H2O + 4 H(+)(in) = ADP + phosphate + 5 H(+)(out). In terms of biological role, produces ATP from ADP in the presence of a proton gradient across the membrane. The alpha chain is a regulatory subunit. This chain is ATP synthase subunit alpha, found in Staphylococcus haemolyticus (strain JCSC1435).